The primary structure comprises 597 residues: MADLLGSMRRTHNCGVLRKEDTGKTVTLMGWAQRWRDHGGVIFIDLRDRYGVTQVVFNPENNAEVHKLADSIRSEWVIAVQGEVLERPDGMVNPKMETGEIEVMVSDLKILNKSKTPPFMVEDNAEVSENLRLEYRYLDLRRPRIAKNIMLRHQVGACVRAFLNENEFLDIETPVLTKSTPEGARDYLVPSRVNTGLFYALPQSPQLFKQLLMVAGYDRYYQIVRCFRDEDLRADRQPEFTQIDLEMSFVGEEDVMGIAEQMIAKVFKDVMGKEVKTPFDRLTYKDAMDRYGLDKPDLRFDLELKEVSSIVEGSDFKVFASVVKKGGMVKAMNAKGCAHFSRKVIDDLTAFVAVYGAKGLAWIKVKEDGSWQSPIAKFFTDDEKAAMAQTLDMAPGDLIFFVADNVKVTNDALGHLRNRVAKELGLIDENEFRFVWVTEFPLVEYDETDKRYVALHHPFTAPMEEDLDLLESDPGAVRSRAYDMVLNGTELGGGSIRIHQPEMQEKVFNMLGLGQEEAEEKFGFLLKALAFGAPPHGGLAFGFDRLIMLLSGENSIRDIIPFPKTQKAACLLTDAPSEVAFEQLAELALRIKKDPAS.

Glu-182 is an L-aspartate binding site. Positions 206-209 (QLFK) are aspartate. Residue Arg-228 participates in L-aspartate binding. ATP-binding positions include 228–230 (RDE) and Gln-237. Position 456 (His-456) interacts with L-aspartate. An ATP-binding site is contributed by Glu-490. Arg-497 is an L-aspartate binding site. 542 to 545 (GFDR) contacts ATP.

It belongs to the class-II aminoacyl-tRNA synthetase family. Type 1 subfamily. As to quaternary structure, homodimer.

The protein resides in the cytoplasm. It carries out the reaction tRNA(Asx) + L-aspartate + ATP = L-aspartyl-tRNA(Asx) + AMP + diphosphate. Functionally, aspartyl-tRNA synthetase with relaxed tRNA specificity since it is able to aspartylate not only its cognate tRNA(Asp) but also tRNA(Asn). Reaction proceeds in two steps: L-aspartate is first activated by ATP to form Asp-AMP and then transferred to the acceptor end of tRNA(Asp/Asn). This is Aspartate--tRNA(Asp/Asn) ligase from Desulfatibacillum aliphaticivorans.